Consider the following 538-residue polypeptide: Cryptic outer membrane porin BglH (538 aa).

An N-terminal signal peptide occupies residues 1 to 25; it reads MFRRNLITSAILLMAPLAFSAQSLA. Positions 52–82 are disordered; the sequence is KDEEKKKYTPATVNRSVSTNDQGYAANPFPT. Residues 62-73 show a composition bias toward polar residues; sequence ATVNRSVSTNDQ.

The protein belongs to the porin LamB (TC 1.B.3) family. In terms of assembly, homomonomer; no physical evidence of a homotrimer has been found, however conductance experiments suggest it may be a homotrimer. The monomer probably consists of 18 antiparallel beta-strands.

The protein resides in the cell outer membrane. In terms of biological role, part of a cryptic operon that is poorly expressed in vivo. May be an ancestral sugar porin with a broad carbohydrate specificity; it binds aromatic beta-D-glucosides such as arbutin and salicin, but with low affinity compared to the binding of maltooligosaccharides to the LamB porin. In Escherichia coli (strain K12), this protein is Cryptic outer membrane porin BglH (bglH).